The chain runs to 742 residues: Phosphoribosylformylglycinamidine synthase subunit PurL (742 aa).

H54 is an active-site residue. ATP contacts are provided by Y57 and K96. E98 provides a ligand contact to Mg(2+). Substrate is bound by residues 99-102 (SHNH) and R121. H100 acts as the Proton acceptor in catalysis. D122 is a binding site for Mg(2+). Substrate is bound by residues G225 and Q245. A Mg(2+)-binding site is contributed by D273. A substrate-binding site is contributed by 317–319 (ESQ). Residue G537 participates in ATP binding. Mg(2+) is bound at residue N538. A substrate-binding site is contributed by S540.

Belongs to the FGAMS family. As to quaternary structure, monomer. Part of the FGAM synthase complex composed of 1 PurL, 1 PurQ and 2 PurS subunits.

It localises to the cytoplasm. The catalysed reaction is N(2)-formyl-N(1)-(5-phospho-beta-D-ribosyl)glycinamide + L-glutamine + ATP + H2O = 2-formamido-N(1)-(5-O-phospho-beta-D-ribosyl)acetamidine + L-glutamate + ADP + phosphate + H(+). It carries out the reaction L-glutamine + H2O = L-glutamate + NH4(+). The protein operates within purine metabolism; IMP biosynthesis via de novo pathway; 5-amino-1-(5-phospho-D-ribosyl)imidazole from N(2)-formyl-N(1)-(5-phospho-D-ribosyl)glycinamide: step 1/2. Its function is as follows. Part of the phosphoribosylformylglycinamidine synthase complex involved in the purines biosynthetic pathway. Catalyzes the ATP-dependent conversion of formylglycinamide ribonucleotide (FGAR) and glutamine to yield formylglycinamidine ribonucleotide (FGAM) and glutamate. The FGAM synthase complex is composed of three subunits. PurQ produces an ammonia molecule by converting glutamine to glutamate. PurL transfers the ammonia molecule to FGAR to form FGAM in an ATP-dependent manner. PurS interacts with PurQ and PurL and is thought to assist in the transfer of the ammonia molecule from PurQ to PurL. This is Phosphoribosylformylglycinamidine synthase subunit PurL from Bacillus subtilis (strain 168).